Here is a 358-residue protein sequence, read N- to C-terminus: E3 ubiquitin-protein ligase RNF146 (358 aa).

The segment at 36–74 (CAICLQTCVHPVSLPCKHVFCYLCVKGASWLGKRCALCR) adopts an RING-type zinc-finger fold. Glycyl lysine isopeptide (Lys-Gly) (interchain with G-Cter in ubiquitin) cross-links involve residues K84 and K94. A WWE domain is found at 91–167 (EELKAASRGN…EHGRRRKIKR (77 aa)). Positions 107, 110, and 114 each coordinate a glycoprotein. A Glycyl lysine isopeptide (Lys-Gly) (interchain with G-Cter in ubiquitin) cross-link involves residue K130. 4 residues coordinate a glycoprotein: Y144, Q153, R163, and K175. A Glycyl lysine isopeptide (Lys-Gly) (interchain with G-Cter in ubiquitin) cross-link involves residue K175. Residues 253–358 (GDNTAERSHR…PDGQCTVTEV (106 aa)) are disordered. Positions 283 to 297 (SIEETESDASSDSED) are enriched in acidic residues. A phosphoserine mark is found at S289 and S293. Polar residues predominate over residues 305-322 (HSLTQQRLLVSNANQTVP).

In terms of assembly, can form homooligomers. Interacts with PARsylated AXIN1, AXIN2, BLZF1, CASC3, H1-2, IPO7, LIG3, NCL, PARP1, XRCC1, XRCC5 and XRCC6. Interacts with DDB1, DHX15, IQGAP1, LRPPRC, PARP2, PRKDC, RUVBL2, TNKS1 and TNKS2. Binding often leads to interactor ubiquitination, in the presence of the appropriate E1 and E2 enzymes, and proteasomal degradation. In terms of processing, ubiquitinated; autoubiquitinated. Autoubiquitination is enhanced upon poly(ADP-ribose)-binding.

The protein resides in the cytoplasm. The protein localises to the cytosol. It is found in the nucleus. It carries out the reaction S-ubiquitinyl-[E2 ubiquitin-conjugating enzyme]-L-cysteine + [acceptor protein]-L-lysine = [E2 ubiquitin-conjugating enzyme]-L-cysteine + N(6)-ubiquitinyl-[acceptor protein]-L-lysine.. It participates in protein modification; protein ubiquitination. Its function is as follows. E3 ubiquitin-protein ligase that specifically binds poly-ADP-ribosylated (PARsylated) proteins and mediates their ubiquitination and subsequent degradation. May regulate many important biological processes, such as cell survival and DNA damage response. Acts as an activator of the Wnt signaling pathway by mediating the ubiquitination of PARsylated AXIN1 and AXIN2, 2 key components of the beta-catenin destruction complex. Acts in cooperation with tankyrase proteins (TNKS and TNKS2), which mediate PARsylation of target proteins AXIN1, AXIN2, BLZF1, CASC3, TNKS and TNKS2. Recognizes and binds tankyrase-dependent PARsylated proteins via its WWE domain and mediates their ubiquitination, leading to their degradation. Different ubiquitin linkage types have been observed: TNKS2 undergoes ubiquitination at 'Lys-48' and 'Lys-63', while AXIN1 is only ubiquitinated at 'Lys-48'. May regulate TNKS and TNKS2 subcellular location, preventing aggregation at a centrosomal location. Neuroprotective protein. Protects the brain against N-methyl-D-aspartate (NMDA) receptor-mediated glutamate excitotoxicity and ischemia, by interfering with PAR-induced cell death, called parthanatos. Prevents nuclear translocation of AIFM1 in a PAR-binding dependent manner. Does not affect PARP1 activation. Protects against cell death induced by DNA damaging agents, such as N-methyl-N-nitro-N-nitrosoguanidine (MNNG) and rescues cells from G1 arrest. Promotes cell survival after gamma-irradiation. Facilitates DNA repair. The chain is E3 ubiquitin-protein ligase RNF146 (RNF146) from Pongo abelii (Sumatran orangutan).